We begin with the raw amino-acid sequence, 345 residues long: S-adenosylmethionine:tRNA ribosyltransferase-isomerase (345 aa).

Belongs to the QueA family. In terms of assembly, monomer.

The protein resides in the cytoplasm. The enzyme catalyses 7-aminomethyl-7-carbaguanosine(34) in tRNA + S-adenosyl-L-methionine = epoxyqueuosine(34) in tRNA + adenine + L-methionine + 2 H(+). Its pathway is tRNA modification; tRNA-queuosine biosynthesis. Transfers and isomerizes the ribose moiety from AdoMet to the 7-aminomethyl group of 7-deazaguanine (preQ1-tRNA) to give epoxyqueuosine (oQ-tRNA). This chain is S-adenosylmethionine:tRNA ribosyltransferase-isomerase, found in Azoarcus sp. (strain BH72).